The primary structure comprises 141 residues: Putative pre-16S rRNA nuclease (141 aa).

Belongs to the YqgF nuclease family.

The protein resides in the cytoplasm. In terms of biological role, could be a nuclease involved in processing of the 5'-end of pre-16S rRNA. This chain is Putative pre-16S rRNA nuclease, found in Vibrio parahaemolyticus serotype O3:K6 (strain RIMD 2210633).